The primary structure comprises 145 residues: Large-conductance mechanosensitive channel (145 aa).

Helical transmembrane passes span 14–34 (VIDLAVGIIIGAAFTAIVNSL) and 83–103 (GAFLSAVINFLIIAWAVFLLV).

The protein belongs to the MscL family. In terms of assembly, homopentamer.

The protein localises to the cell inner membrane. Functionally, channel that opens in response to stretch forces in the membrane lipid bilayer. May participate in the regulation of osmotic pressure changes within the cell. The sequence is that of Large-conductance mechanosensitive channel from Paracoccus denitrificans (strain Pd 1222).